The primary structure comprises 212 residues: Thymidine kinase (212 aa).

Residues 16 to 23 and 99 to 102 each bind ATP; these read GPMFSGKS and DEAQ. Glu-100 functions as the Proton acceptor in the catalytic mechanism.

The protein belongs to the thymidine kinase family. In terms of assembly, homotetramer.

It is found in the cytoplasm. It catalyses the reaction thymidine + ATP = dTMP + ADP + H(+). The sequence is that of Thymidine kinase from Deinococcus radiodurans (strain ATCC 13939 / DSM 20539 / JCM 16871 / CCUG 27074 / LMG 4051 / NBRC 15346 / NCIMB 9279 / VKM B-1422 / R1).